Consider the following 773-residue polypeptide: Tyrosine kinase receptor Cad96Ca (773 aa).

The signal sequence occupies residues methionine 1–alanine 48. The Extracellular portion of the chain corresponds to histidine 49–threonine 315. The Cadherin domain maps to tyrosine 58–threonine 172. 3 N-linked (GlcNAc...) asparagine glycosylation sites follow: asparagine 126, asparagine 164, and asparagine 180. Residues serine 196–serine 302 form a disordered region. Pro residues predominate over residues tryptophan 209–isoleucine 235. The segment covering serine 243–valine 253 has biased composition (acidic residues). Polar residues-rich tracts occupy residues threonine 254–valine 283 and glutamate 290–serine 302. Residues asparagine 278, asparagine 279, asparagine 300, and asparagine 301 are each glycosylated (N-linked (GlcNAc...) asparagine). The helical transmembrane segment at isoleucine 316–leucine 336 threads the bilayer. The Cytoplasmic portion of the chain corresponds to cysteine 337–leucine 773. 2 disordered regions span residues lysine 352–aspartate 373 and threonine 411–serine 447. Over residues serine 361–aspartate 373 the composition is skewed to polar residues. Residues threonine 411 to serine 433 show a composition bias toward low complexity. In terms of domain architecture, Protein kinase spans leucine 470–methionine 749. ATP is bound by residues leucine 476–valine 484 and lysine 504. Aspartate 610 acts as the Proton acceptor in catalysis.

It belongs to the protein kinase superfamily. Tyr protein kinase family. Fibroblast growth factor receptor subfamily.

It localises to the membrane. It carries out the reaction L-tyrosyl-[protein] + ATP = O-phospho-L-tyrosyl-[protein] + ADP + H(+). This chain is Tyrosine kinase receptor Cad96Ca (Cad96Ca), found in Drosophila melanogaster (Fruit fly).